The primary structure comprises 205 residues: SREBP regulating gene protein (205 aa).

Over 1 to 16 (MLNLAALLWRRLLRKR) the chain is Cytoplasmic. A helical membrane pass occupies residues 17–35 (WVLALVFGLSLVYFLSSTF). At 36–205 (KQEERAVRDR…GESPPELFPA (170 aa)) the chain is on the lumenal side. N-linked (GlcNAc...) asparagine glycosylation occurs at Asn67.

This sequence belongs to the SPRING family. Interacts with SCAP. Ubiquitously expressed with a slightly higher expression in the liver and kidney.

It is found in the golgi apparatus membrane. Its function is as follows. Positively regulates hepatic SREBP signaling pathway by modulating the proper localization of SCAP (SREBP cleavage-activating protein) to the endoplasmic reticulum, thereby controlling the level of functional SCAP. Plays a crucial role during embryogenesis. The chain is SREBP regulating gene protein (Spring1) from Mus musculus (Mouse).